A 767-amino-acid polypeptide reads, in one-letter code: Pyrin (767 aa).

The 92-residue stretch at 1–92 (MAKTLGDHLL…AEELRKATGT (92 aa)) folds into the Pyrin domain. The interval 94–219 (HLIEENRVGG…LQGLYNNAPG (126 aa)) is disordered. 3 stretches are compositionally biased toward polar residues: residues 126 to 142 (GTQQNNDESDTLPSSQA), 165 to 176 (LDSQTKPWTRST), and 183 to 208 (TQGTQSPGDKESTASAQLRRNVSSAG). Phosphoserine is present on Ser-241. Residues 311–346 (TSLIGEERCPTSWTENGNGSPETTESSGETAGSILS) are disordered. Residues 321 to 340 (TSWTENGNGSPETTESSGET) show a composition bias toward polar residues. A B box-type zinc finger spans residues 439–481 (QSLPQCPRHMKQVLLLFCEDHREPICLICRLSLEHQGHRVRPI). 4 residues coordinate Zn(2+): Cys-444, His-447, Cys-467, and His-473. The stretch at 481 to 510 (IEEAALEYKEQIREQLERLREMRGYVEEHR) forms a coiled coil. The segment at 489 to 647 (KEQIREQLER…CFSEMLSSEM (159 aa)) is required for homotrimerization and induction of pyroptosomes. A disordered region spans residues 697–719 (GGSEPKDYLHPQPAQDTPELHEI).

In terms of assembly, homotrimer. Interacts (via the B box-type zinc finger) with PSTPIP1. Interacts (via the B30.2/SPRY domain) with several components of the inflammasome complex, including CASP1 p20 and p10 subunits, CASP5, PYCARD, NLRP1, NLRP2 and NLRP3, as well as with unprocessed IL1B; this interaction may lead to autophagic degradation of these proteins. Component of the AIM2 PANoptosome complex, a multiprotein complex that drives inflammatory cell death (PANoptosis). Interacts with NFKBIA and RELA. Interacts weakly with VASP and ACTR3. Interacts with active ULK1 (phosphorylated on 'Ser-317') and BECN1 simultaneously. Also interacts with ATG16L1 (via WD repeats), and with ATG8 family members, including GABARAP, GABARAPL1 and, to a lesser extent, GABARAPL2, MAP1LC3A/LC3A and MAP1LC3C/LC3C. Interacts with TRIM21. Interacts with YWHAB, YWHAE, YWHAG, YWHAH, YWHAQ and YWHAZ; the interaction is required for the down-regulation of pyrin pro-inflammatory activity. Phosphorylation at Ser-241 is required for the interaction with 14-3-3 proteins and down-regulation of pyrin pro-inflammatory activity. Post-translationally, degraded along with the delivery of its substrates to autolysosomal compartments (at protein level). In terms of tissue distribution, expressed in spleen peripheral blood granulocytes. Not expressed in lymphocytes, thymus, testis, ovary, heart, brain, lung, liver, kidney and muscle.

It localises to the cytoplasm. Its subcellular location is the cytoskeleton. The protein localises to the cell projection. The protein resides in the ruffle. It is found in the lamellipodium. It localises to the cytoplasmic vesicle. Its subcellular location is the autophagosome. The protein localises to the nucleus. Its function is as follows. Involved in the regulation of innate immunity and the inflammatory response in response to IFNG/IFN-gamma. Organizes autophagic machinery by serving as a platform for the assembly of ULK1, Beclin 1/BECN1, ATG16L1, and ATG8 family members and recognizes specific autophagy targets, thus coordinating target recognition with assembly of the autophagic apparatus and initiation of autophagy. Acts as an autophagy receptor for the degradation of several inflammasome components, including CASP1, NLRP1 and NLRP3, hence preventing excessive IL1B- and IL18-mediated inflammation. However, it can also have a positive effect in the inflammatory pathway, acting as an innate immune sensor that triggers PYCARD/ASC specks formation, caspase-1 activation, and IL1B and IL18 production. Together with AIM2, also acts as a mediator of pyroptosis, necroptosis and apoptosis (PANoptosis), an integral part of host defense against pathogens, in response to bacterial infection. It is required for PSTPIP1-induced PYCARD/ASC oligomerization and inflammasome formation. Recruits PSTPIP1 to inflammasomes, and is required for PSTPIP1 oligomerization. The protein is Pyrin of Mus musculus (Mouse).